The following is a 608-amino-acid chain: Aspartate--tRNA(Asp/Asn) ligase (608 aa).

Glutamate 175 serves as a coordination point for L-aspartate. The tract at residues 199–202 (QLFK) is aspartate. Position 221 (arginine 221) interacts with L-aspartate. Residues 221 to 223 (RDE) and glutamine 230 each bind ATP. L-aspartate is bound at residue histidine 453. Glutamate 487 lines the ATP pocket. Arginine 494 contacts L-aspartate. Position 539–542 (539–542 (GWDR)) interacts with ATP. A disordered region spans residues 566–608 (IDPLTDAPAAITPQQRKEAGIDAKPKPKAEAQAEAQAEESAEK). Over residues 580 to 596 (QRKEAGIDAKPKPKAEA) the composition is skewed to basic and acidic residues.

It belongs to the class-II aminoacyl-tRNA synthetase family. Type 1 subfamily. As to quaternary structure, homodimer.

It is found in the cytoplasm. The enzyme catalyses tRNA(Asx) + L-aspartate + ATP = L-aspartyl-tRNA(Asx) + AMP + diphosphate. In terms of biological role, aspartyl-tRNA synthetase with relaxed tRNA specificity since it is able to aspartylate not only its cognate tRNA(Asp) but also tRNA(Asn). Reaction proceeds in two steps: L-aspartate is first activated by ATP to form Asp-AMP and then transferred to the acceptor end of tRNA(Asp/Asn). This chain is Aspartate--tRNA(Asp/Asn) ligase, found in Corynebacterium glutamicum (strain R).